Here is a 326-residue protein sequence, read N- to C-terminus: Endo-beta-1,4-glucanase A (326 aa).

The first 19 residues, 1-19 (MRSLVLLSSVLALVAPSKG), serve as a signal peptide directing secretion. Glu-150 serves as the catalytic Proton donor. Glu-257 serves as the catalytic Nucleophile.

It belongs to the glycosyl hydrolase 5 (cellulase A) family.

Its subcellular location is the secreted. The catalysed reaction is Endohydrolysis of (1-&gt;4)-beta-D-glucosidic linkages in cellulose, lichenin and cereal beta-D-glucans.. In terms of biological role, has endoglucanase activity on substrates containing beta-1,4 glycosidic bonds, like in carboxymethylcellulose (CMC), hydroxyethylcellulose (HEC) and beta-glucan. Involved in the degradation of complex natural cellulosic substrates. The polypeptide is Endo-beta-1,4-glucanase A (eglA) (Emericella nidulans (strain FGSC A4 / ATCC 38163 / CBS 112.46 / NRRL 194 / M139) (Aspergillus nidulans)).